Consider the following 513-residue polypeptide: ATP synthase subunit alpha (513 aa).

169-176 serves as a coordination point for ATP; it reads GDRQTGKT.

It belongs to the ATPase alpha/beta chains family. In terms of assembly, F-type ATPases have 2 components, CF(1) - the catalytic core - and CF(0) - the membrane proton channel. CF(1) has five subunits: alpha(3), beta(3), gamma(1), delta(1), epsilon(1). CF(0) has three main subunits: a(1), b(2) and c(9-12). The alpha and beta chains form an alternating ring which encloses part of the gamma chain. CF(1) is attached to CF(0) by a central stalk formed by the gamma and epsilon chains, while a peripheral stalk is formed by the delta and b chains.

The protein localises to the cell inner membrane. It carries out the reaction ATP + H2O + 4 H(+)(in) = ADP + phosphate + 5 H(+)(out). Functionally, produces ATP from ADP in the presence of a proton gradient across the membrane. The alpha chain is a regulatory subunit. The polypeptide is ATP synthase subunit alpha (Shewanella oneidensis (strain ATCC 700550 / JCM 31522 / CIP 106686 / LMG 19005 / NCIMB 14063 / MR-1)).